The sequence spans 207 residues: Protein ERP4 (207 aa).

The N-terminal stretch at 1–21 (MRVFTLIAILFSSSLLTHAFS) is a signal peptide. Topologically, residues 22–174 (SNYAPVGISL…TVSSTESRLT (153 aa)) are lumenal. The GOLD domain maps to 36 to 118 (KECLYYDLSS…PKKVEITLEK (83 aa)). The chain crosses the membrane as a helical span at residues 175-195 (WLSLLIMGVMVGISIVQALII). Residues 196–207 (QFFFTSRQKNYV) are Cytoplasmic-facing.

The protein belongs to the EMP24/GP25L family.

It is found in the endoplasmic reticulum membrane. In terms of biological role, involved in vesicular protein trafficking. This chain is Protein ERP4 (ERP4), found in Saccharomyces cerevisiae (strain ATCC 204508 / S288c) (Baker's yeast).